The sequence spans 368 residues: D-alanine--D-alanine ligase (368 aa).

Positions 151–358 constitute an ATP-grasp domain; it reads KKLLAAEGLP…YGTLVSTLVD (208 aa). 179–234 contributes to the ATP binding site; the sequence is RSRLHLPVFVKPARGGSSIGITRVAEWAALDDAIAHARRHDPKVIVESGIAGREVE. Residues Asp313, Glu325, and Asn327 each coordinate Mg(2+).

The protein belongs to the D-alanine--D-alanine ligase family. The cofactor is Mg(2+). Mn(2+) is required as a cofactor.

It is found in the cytoplasm. The enzyme catalyses 2 D-alanine + ATP = D-alanyl-D-alanine + ADP + phosphate + H(+). Its pathway is cell wall biogenesis; peptidoglycan biosynthesis. Functionally, cell wall formation. In Rhodococcus opacus (strain B4), this protein is D-alanine--D-alanine ligase.